We begin with the raw amino-acid sequence, 80 residues long: RNA-binding protein Hfq (80 aa).

Residues 9-69 (DVFLNQVRKE…VSTISPNSPV (61 aa)) form the Sm domain.

This sequence belongs to the Hfq family. Homohexamer.

RNA chaperone that binds small regulatory RNA (sRNAs) and mRNAs to facilitate mRNA translational regulation in response to envelope stress, environmental stress and changes in metabolite concentrations. Also binds with high specificity to tRNAs. In Alkaliphilus oremlandii (strain OhILAs) (Clostridium oremlandii (strain OhILAs)), this protein is RNA-binding protein Hfq.